The sequence spans 194 residues: Ion-translocating oxidoreductase complex subunit B (194 aa).

A hydrophobic region spans residues 1 to 26; that stretch reads MSSILIAVIAISALALVFGLILGFAS. The 59-residue stretch at 32–90 folds into the 4Fe-4S domain; the sequence is ESDPIVDQIDSILPQTQCGQCGYPGCKPYAEAIANGDTINKCPPGGQATIEKLADLMGV. [4Fe-4S] cluster contacts are provided by C49, C52, C57, C73, C114, C117, C120, C124, C144, C147, C150, and C154. 4Fe-4S ferredoxin-type domains are found at residues 105-134 and 135-164; these read KIAF…GGTK and ALHT…MIPV.

It belongs to the 4Fe4S bacterial-type ferredoxin family. RnfB subfamily. As to quaternary structure, the complex is composed of six subunits: RnfA, RnfB, RnfC, RnfD, RnfE and RnfG. Requires [4Fe-4S] cluster as cofactor.

Its subcellular location is the cell inner membrane. Its function is as follows. Part of a membrane-bound complex that couples electron transfer with translocation of ions across the membrane. The polypeptide is Ion-translocating oxidoreductase complex subunit B (Aliivibrio salmonicida (strain LFI1238) (Vibrio salmonicida (strain LFI1238))).